A 434-amino-acid chain; its full sequence is Serine hydroxymethyltransferase (434 aa).

(6S)-5,6,7,8-tetrahydrofolate-binding positions include Leu133 and Gly137 to Leu139. The residue at position 242 (Lys242) is an N6-(pyridoxal phosphate)lysine. Ser366 to Phe368 contributes to the (6S)-5,6,7,8-tetrahydrofolate binding site.

It belongs to the SHMT family. In terms of assembly, homodimer. Requires pyridoxal 5'-phosphate as cofactor.

The protein localises to the cytoplasm. It catalyses the reaction (6R)-5,10-methylene-5,6,7,8-tetrahydrofolate + glycine + H2O = (6S)-5,6,7,8-tetrahydrofolate + L-serine. It participates in one-carbon metabolism; tetrahydrofolate interconversion. The protein operates within amino-acid biosynthesis; glycine biosynthesis; glycine from L-serine: step 1/1. Functionally, catalyzes the reversible interconversion of serine and glycine with tetrahydrofolate (THF) serving as the one-carbon carrier. This reaction serves as the major source of one-carbon groups required for the biosynthesis of purines, thymidylate, methionine, and other important biomolecules. Also exhibits THF-independent aldolase activity toward beta-hydroxyamino acids, producing glycine and aldehydes, via a retro-aldol mechanism. This is Serine hydroxymethyltransferase from Erythrobacter litoralis (strain HTCC2594).